The following is a 180-amino-acid chain: MILYFHGFDATSPGNHEKMRQLQFVDPDVRLISYSTLHPKYDMQYLLNEVSRQLTQSDDPAPLAIGVGLGGYWAERIGFLNGLKTVMINPNLHPEDNMLGKIDRPEEYADIASKCVSQFREKHKGRGMCILSRQDEVHDNQAVASILAPFYPIVWDEEQRHKFPSLAAHLAEIKAFKEQQ.

The protein belongs to the UPF0227 family.

In Shewanella loihica (strain ATCC BAA-1088 / PV-4), this protein is UPF0227 protein Shew_1627.